We begin with the raw amino-acid sequence, 325 residues long: MYIAVPAEILCLILPLLLGVAFLVLAERKVMAFVQRRKGPDVVGSFGLLQPLADGLKLILKEPISPSSANFFLFRMAPVATFMLSLVAWAVVPFDYGMVLSDLNIGLLYLFAISSLGVYGIIIAGWSSNSKYAFLGALRSAAQMVSYEVSIGLILITVLICVGSCNLSEIVMAQKQIWFGIPLFPVLVMFFISCLAETNRAPFDLPEAEAELVAGYNVEYSSMGFALFFLGEYANMILMSGLCTLLFLGGWLPILDLPISKKIPCSIWFSIKVLLFLFLYIWVRAAFPRYRYDQLMGLGRKVFLPLSLARVVPVSGVSVTFRWLP.

8 helical membrane-spanning segments follow: residues 5–25, 40–60, 79–99, 105–125, 151–171, 177–197, 237–257, and 263–283; these read VPAE…FLVL, PDVV…KLIL, VATF…YGMV, IGLL…IIAG, IGLI…SEIV, IWFG…CLAE, ILMS…ILDL, and IPCS…YIWV.

The protein belongs to the complex I subunit 1 family.

It localises to the mitochondrion inner membrane. It carries out the reaction a ubiquinone + NADH + 5 H(+)(in) = a ubiquinol + NAD(+) + 4 H(+)(out). Core subunit of the mitochondrial membrane respiratory chain NADH dehydrogenase (Complex I) that is believed to belong to the minimal assembly required for catalysis. Complex I functions in the transfer of electrons from NADH to the respiratory chain. The immediate electron acceptor for the enzyme is believed to be ubiquinone. The chain is NADH-ubiquinone oxidoreductase chain 1 (ND1) from Triticum aestivum (Wheat).